We begin with the raw amino-acid sequence, 214 residues long: Threonylcarbamoyl-AMP synthase (214 aa).

The region spanning 9–214 is the YrdC-like domain; the sequence is TDSTIQAATW…GDALTGQVIR (206 aa).

It belongs to the SUA5 family. TsaC subfamily.

It localises to the cytoplasm. The enzyme catalyses L-threonine + hydrogencarbonate + ATP = L-threonylcarbamoyladenylate + diphosphate + H2O. Functionally, required for the formation of a threonylcarbamoyl group on adenosine at position 37 (t(6)A37) in tRNAs that read codons beginning with adenine. Catalyzes the conversion of L-threonine, HCO(3)(-)/CO(2) and ATP to give threonylcarbamoyl-AMP (TC-AMP) as the acyladenylate intermediate, with the release of diphosphate. This Psychrobacter cryohalolentis (strain ATCC BAA-1226 / DSM 17306 / VKM B-2378 / K5) protein is Threonylcarbamoyl-AMP synthase.